A 240-amino-acid chain; its full sequence is B-cell receptor-associated protein 29 (240 aa).

The Lumenal portion of the chain corresponds to 1–6 (MTLQWT). A helical transmembrane segment spans residues 7 to 27 (AVATFLYAEIGLILIFCLPFI). Residues 28 to 43 (PPQRWQKIFSFSVWGK) lie on the Cytoplasmic side of the membrane. Residues 44-64 (IASFWNKAFLTIIILLIVLFL) form a helical membrane-spanning segment. The Lumenal portion of the chain corresponds to 65–103 (DAVREVRKYSSTHTIEKSSASRPAAYEHTQMKLFRSQRN). Residues 104-124 (LYISGFSLFFWLVLRRLVTLI) traverse the membrane as a helical segment. At 125–240 (TQLAKELSHK…DRAGKDKKCL (116 aa)) the chain is on the cytoplasmic side. Residues 166 to 233 (GKEEEHILEA…REHSELQDRA (68 aa)) adopt a coiled-coil conformation. The short motif at 237–240 (KKCL) is the Di-lysine motif element.

This sequence belongs to the BCAP29/BCAP31 family. In terms of assembly, homodimer and heterodimer with BCAP31. Binds CASP8 as a complex containing BCAP31, BCAP29, BCL2 and/or BCL2L1. Interacts with VAMP3, VAMP1 and membrane IgD immunoglobulins. May interact with ACTG1 and non-muscle myosin II.

It is found in the endoplasmic reticulum membrane. Its function is as follows. May play a role in anterograde transport of membrane proteins from the endoplasmic reticulum to the Golgi. May be involved in CASP8-mediated apoptosis. The sequence is that of B-cell receptor-associated protein 29 (BCAP29) from Bos taurus (Bovine).